Reading from the N-terminus, the 288-residue chain is Bifunctional protein FolD 2 (288 aa).

NADP(+) is bound by residues 166–168 and Ser-191; that span reads GRS.

The protein belongs to the tetrahydrofolate dehydrogenase/cyclohydrolase family. In terms of assembly, homodimer.

The catalysed reaction is (6R)-5,10-methylene-5,6,7,8-tetrahydrofolate + NADP(+) = (6R)-5,10-methenyltetrahydrofolate + NADPH. The enzyme catalyses (6R)-5,10-methenyltetrahydrofolate + H2O = (6R)-10-formyltetrahydrofolate + H(+). It participates in one-carbon metabolism; tetrahydrofolate interconversion. Catalyzes the oxidation of 5,10-methylenetetrahydrofolate to 5,10-methenyltetrahydrofolate and then the hydrolysis of 5,10-methenyltetrahydrofolate to 10-formyltetrahydrofolate. This chain is Bifunctional protein FolD 2, found in Frankia alni (strain DSM 45986 / CECT 9034 / ACN14a).